A 174-amino-acid polypeptide reads, in one-letter code: Translation initiation factor IF-3 (174 aa).

It belongs to the IF-3 family. In terms of assembly, monomer.

It is found in the cytoplasm. Its function is as follows. IF-3 binds to the 30S ribosomal subunit and shifts the equilibrium between 70S ribosomes and their 50S and 30S subunits in favor of the free subunits, thus enhancing the availability of 30S subunits on which protein synthesis initiation begins. This chain is Translation initiation factor IF-3, found in Xanthobacter autotrophicus (strain ATCC BAA-1158 / Py2).